We begin with the raw amino-acid sequence, 226 residues long: CD9 antigen (226 aa).

The Cytoplasmic segment spans residues 1-12; it reads MPVKGGTKCIKY. The S-palmitoyl cysteine moiety is linked to residue Cys9. A helical transmembrane segment spans residues 13–33; that stretch reads LLFGFNFIFWLAGIAVLAVGL. At 34–53 the chain is on the extracellular side; it reads WLRFDSQTKSIFEQDSQPSS. A helical transmembrane segment spans residues 54 to 74; sequence FYTGVYILIGAGALMMLVGFL. The Cytoplasmic portion of the chain corresponds to 75–85; it reads GCCGAVQESQC. S-palmitoyl cysteine attachment occurs at residues Cys76, Cys77, and Cys85. The helical transmembrane segment at 86 to 109 threads the bilayer; that stretch reads MLGLFFGFLLVIFAIEIAAAIWGY. The Extracellular segment spans residues 110–193; the sequence is SHKDEVIQEV…KEVFHNKFHI (84 aa). 2 disulfide bridges follow: Cys150-Cys179 and Cys151-Cys165. A helical membrane pass occupies residues 194–219; sequence IGAVGIGIAVVMIFGMIFSMILCCAI. 2 S-palmitoyl cysteine lipidation sites follow: Cys216 and Cys217. The Cytoplasmic segment spans residues 220 to 226; sequence RRSREMV.

Belongs to the tetraspanin (TM4SF) family. As to quaternary structure, forms both disulfide-linked homodimers and higher homooligomers as well as heterooligomers with other members of the tetraspanin family. Interacts (via the second extracellular domain) with integrin ITGAV:ITGB3. Interacts with integrin ITGA6:ITGB1; interaction takes place in oocytes and is involved in sperm-egg fusion. Part of integrin-tetraspanin complexes composed of CD81, beta-1 and beta-2 integrins in the membrane of monocyte/macrophages. Interacts with CD63; identified in a complex with CD63 and ITGB3. Associates with CR2/CD21 and with PTGFRN/CD9P1. Part of a complex composed of CD9, CD81, PTGFRN and IGSF8. Interacts directly with IGSF8. Interacts with PDPN; this interaction is homophilic and attenuates platelet aggregation and pulmonary metastasis induced by PDPN. Interacts (on T cell side) with CD81 at immunological synapses between antigen-presenting cells and T cells. Palmitoylated at a low, basal level in unstimulated platelets. The level of palmitoylation increases when platelets are activated by thrombin (in vitro). The protein exists in three forms with molecular masses between 22 and 27 kDa, and is known to carry covalently linked fatty acids. Palmitoylation by ZDHHC2 regulates CD9 expression, association with other tetraspanin family proteins and function in cell adhesion.

It is found in the cell membrane. The protein resides in the membrane. The protein localises to the secreted. It localises to the extracellular exosome. Functionally, integral membrane protein associated with integrins, which regulates different processes, such as sperm-egg fusion, platelet activation and aggregation, and cell adhesion. Present at the cell surface of oocytes and plays a key role in sperm-egg fusion, possibly by organizing multiprotein complexes and the morphology of the membrane required for the fusion. In myoblasts, associates with CD81 and PTGFRN and inhibits myotube fusion during muscle regeneration. In macrophages, associates with CD81 and beta-1 and beta-2 integrins, and prevents macrophage fusion into multinucleated giant cells specialized in ingesting complement-opsonized large particles. Also prevents the fusion between mononuclear cell progenitors into osteoclasts in charge of bone resorption. Acts as a receptor for PSG17. Involved in platelet activation and aggregation. Regulates paranodal junction formation. Involved in cell adhesion, cell motility and tumor metastasis. This is CD9 antigen from Felis catus (Cat).